A 287-amino-acid polypeptide reads, in one-letter code: Co-chaperone protein DjlA (287 aa).

Residues 1-6 are Periplasmic-facing; the sequence is MQIFGK. The chain crosses the membrane as a helical span at residues 7–30; the sequence is ILGAFFGFLFGGVFGALFGLFIGH. Over 31-287 the chain is Cytoplasmic; that stretch reads QFDKARRLSQ…DLIKKEKGFK (257 aa). A disordered region spans residues 192 to 213; that stretch reads GGFGGQQHQSHHSSSHGGWQQA. A J domain is found at 221–287; the sequence is DAYKILGIDA…DLIKKEKGFK (67 aa).

Homodimer.

Its subcellular location is the cell inner membrane. In terms of biological role, regulatory DnaK co-chaperone. Direct interaction between DnaK and DjlA is needed for the induction of the wcaABCDE operon, involved in the synthesis of a colanic acid polysaccharide capsule, possibly through activation of the RcsB/RcsC phosphotransfer signaling pathway. The colanic acid capsule may help the bacterium survive conditions outside the host. In Vibrio vulnificus (strain CMCP6), this protein is Co-chaperone protein DjlA.